Here is a 143-residue protein sequence, read N- to C-terminus: MKLNTLAPAAGSKSAPKRLGRGIGSGLGKTSGKGHKGQKARSGGYHKVGFEGGQMPLQRRLPKFGFTSASKRYVAEIRLHELNNVVADEVTLDTLKDFGLIRKDIKTVKVIASGEIQKAVSLKGIACTKGAKEAIEKAGGKVE.

Residues 1 to 52 (MKLNTLAPAAGSKSAPKRLGRGIGSGLGKTSGKGHKGQKARSGGYHKVGFEG) are disordered. A compositionally biased stretch (gly residues) spans 21–31 (RGIGSGLGKTS).

Belongs to the universal ribosomal protein uL15 family. As to quaternary structure, part of the 50S ribosomal subunit.

Binds to the 23S rRNA. In Francisella tularensis subsp. novicida (strain U112), this protein is Large ribosomal subunit protein uL15.